A 404-amino-acid chain; its full sequence is Cysteine desulfurase IscS (404 aa).

Pyridoxal 5'-phosphate is bound by residues 75–76 (AT), Asn-155, Gln-183, and 203–205 (SAH). Position 206 is an N6-(pyridoxal phosphate)lysine (Lys-206). A pyridoxal 5'-phosphate-binding site is contributed by Thr-243. The active-site Cysteine persulfide intermediate is the Cys-328. Cys-328 is a [2Fe-2S] cluster binding site.

Belongs to the class-V pyridoxal-phosphate-dependent aminotransferase family. NifS/IscS subfamily. In terms of assembly, homodimer. Forms a heterotetramer with IscU, interacts with other sulfur acceptors. Pyridoxal 5'-phosphate is required as a cofactor.

The protein localises to the cytoplasm. It catalyses the reaction (sulfur carrier)-H + L-cysteine = (sulfur carrier)-SH + L-alanine. It functions in the pathway cofactor biosynthesis; iron-sulfur cluster biosynthesis. Its function is as follows. Master enzyme that delivers sulfur to a number of partners involved in Fe-S cluster assembly, tRNA modification or cofactor biosynthesis. Catalyzes the removal of elemental sulfur atoms from cysteine to produce alanine. Functions as a sulfur delivery protein for Fe-S cluster synthesis onto IscU, an Fe-S scaffold assembly protein, as well as other S acceptor proteins. This is Cysteine desulfurase IscS from Buchnera aphidicola subsp. Schizaphis graminum (strain Sg).